Reading from the N-terminus, the 978-residue chain is Monofunctional C1-tetrahydrofolate synthase, mitochondrial (978 aa).

Over residues 1 to 10 (MGTRLPLVLR) the composition is skewed to low complexity. The transit peptide at 1-31 (MGTRLPLVLRQLRRPPQPPGPPRRLRVPCRA) directs the protein to the mitochondrion. Positions 1–71 (MGTRLPLVLR…SPGGRTPAAR (71 aa)) are disordered. The segment at 31–348 (ASSGGGGGGG…REQQHRRWRL (318 aa)) is methylenetetrahydrofolate dehydrogenase and cyclohydrolase. Positions 33-45 (SGGGGGGGGGREG) are enriched in gly residues. The residue at position 189 (K189) is an N6-acetyllysine; alternate. K189 is modified (N6-succinyllysine; alternate). The tract at residues 349–978 (HCLKLQPLSP…TETEQVKGLF (630 aa)) is formyltetrahydrofolate synthetase. At S357 the chain carries Phosphoserine. 423-430 (TPLGEGKS) is an ATP binding site. K596 is modified (N6-succinyllysine).

It in the N-terminal section; belongs to the tetrahydrofolate dehydrogenase/cyclohydrolase family. This sequence in the C-terminal section; belongs to the formate--tetrahydrofolate ligase family. Homodimer. In terms of tissue distribution, detected in most tissues, highest expression found in placenta, thymus and brain. Low expression is found in liver and skeletal muscle. Up-regulated in colon adenocarcinoma.

It is found in the mitochondrion. It carries out the reaction (6S)-5,6,7,8-tetrahydrofolate + formate + ATP = (6R)-10-formyltetrahydrofolate + ADP + phosphate. It participates in one-carbon metabolism; tetrahydrofolate interconversion. Its function is as follows. May provide the missing metabolic reaction required to link the mitochondria and the cytoplasm in the mammalian model of one-carbon folate metabolism complementing thus the enzymatic activities of MTHFD2. This chain is Monofunctional C1-tetrahydrofolate synthase, mitochondrial, found in Homo sapiens (Human).